The following is a 288-amino-acid chain: Syntaxin-1B (288 aa).

Residues 1–13 (MKDRTQELRSAKD) show a composition bias toward basic and acidic residues. A disordered region spans residues 1–20 (MKDRTQELRSAKDSDDEEEV). Residues 1–264 (MKDRTQELRS…KYQSKARRKK (264 aa)) are Cytoplasmic-facing. Serine 10 and serine 14 each carry phosphoserine. A coiled-coil region spans residues 29-104 (MDEFFEQVEE…IEQSIEQEEG (76 aa)). The t-SNARE coiled-coil homology domain occupies 191–253 (LNEIETRHNE…ERAVSDTKKA (63 aa)). Residues 265–288 (IMIIICCVVLGVVLASSIGGTLGL) traverse the membrane as a helical; Anchor for type IV membrane protein segment.

It belongs to the syntaxin family. Interacts with OTOF. Interacts with SYT6 and SYT8; the interaction is Ca(2+)-dependent. Post-translationally, phosphorylated by CK2. In terms of processing, (Microbial infection) Targeted and hydrolyzed by C.botulinum neurotoxin type C (BoNT/C); cleavage by BoNT/C inhibits neurotransmitter release. Probably hydrolyzes the 252-Lys-|-Ala-253 bond.

Its subcellular location is the membrane. Its function is as follows. Potentially involved in docking of synaptic vesicles at presynaptic active zones. May mediate Ca(2+)-regulation of exocytosis acrosomal reaction in sperm. The protein is Syntaxin-1B (STX1B) of Bos taurus (Bovine).